Consider the following 348-residue polypeptide: D-alanine--D-alanine ligase (348 aa).

Positions 132–334 (KRVLESIGIP…YPDLIEELVT (203 aa)) constitute an ATP-grasp domain. 162–217 (LARLTFPIFVKPANMGSSVGISKAQTKVELRKAIQLALTYDSRVLIEQGVVAREIE) lines the ATP pocket. Mg(2+)-binding residues include Asp-288, Glu-301, and Asn-303.

This sequence belongs to the D-alanine--D-alanine ligase family. Mg(2+) is required as a cofactor. Mn(2+) serves as cofactor.

Its subcellular location is the cytoplasm. It carries out the reaction 2 D-alanine + ATP = D-alanyl-D-alanine + ADP + phosphate + H(+). The protein operates within cell wall biogenesis; peptidoglycan biosynthesis. Its function is as follows. Cell wall formation. The polypeptide is D-alanine--D-alanine ligase (Streptococcus pyogenes serotype M3 (strain SSI-1)).